A 271-amino-acid polypeptide reads, in one-letter code: Aminoglycoside N(3)-acetyltransferase III (271 aa).

H31, A32, S33, V34, and K35 together coordinate CoA. Residues Y64, D72, and E102 each contribute to the a 2-deoxystreptamine antibiotic site. Positions 104, 105, and 109 each coordinate CoA. Residues E123, Y146, and D170 each coordinate a 2-deoxystreptamine antibiotic. Residues T171 and T173 each coordinate CoA. Positions 176, 212, 213, and 221 each coordinate a 2-deoxystreptamine antibiotic.

It belongs to the antibiotic N-acetyltransferase family. In terms of assembly, homodimer.

The catalysed reaction is a 2-deoxystreptamine antibiotic + acetyl-CoA = an N(3)-acetyl-2-deoxystreptamine antibiotic + CoA + H(+). Resistance to antibiotics containing the 2-deoxy-streptamine ring including dibekacin, gentamicin, kanamycin, sisomicin, tobramycin and neomycin, but not to amikacin or netilmicin. Acetylates a broad range of both 4,5- and 4,6-disubstituted aminoglycosides, including neomycin, paromomycin, ribostamycin, sisomicin, gentamicin, tobramycin and kanamycin, with no preference of one disubstitution over the other. Acetylates sisomicin and kanamycin most and least efficiently, respectively. Does not modify plazomicin. The polypeptide is Aminoglycoside N(3)-acetyltransferase III (Pseudomonas aeruginosa).